The sequence spans 440 residues: Serine hydroxymethyltransferase (440 aa).

(6S)-5,6,7,8-tetrahydrofolate is bound by residues Leu-119 and 123–125; that span reads GHL. Lys-228 is modified (N6-(pyridoxal phosphate)lysine). 370–372 lines the (6S)-5,6,7,8-tetrahydrofolate pocket; that stretch reads SPF.

The protein belongs to the SHMT family. Homodimer. It depends on pyridoxal 5'-phosphate as a cofactor.

Its subcellular location is the cytoplasm. It catalyses the reaction (6R)-5,10-methylene-5,6,7,8-tetrahydrofolate + glycine + H2O = (6S)-5,6,7,8-tetrahydrofolate + L-serine. It functions in the pathway one-carbon metabolism; tetrahydrofolate interconversion. Its pathway is amino-acid biosynthesis; glycine biosynthesis; glycine from L-serine: step 1/1. Catalyzes the reversible interconversion of serine and glycine with tetrahydrofolate (THF) serving as the one-carbon carrier. This reaction serves as the major source of one-carbon groups required for the biosynthesis of purines, thymidylate, methionine, and other important biomolecules. Also exhibits THF-independent aldolase activity toward beta-hydroxyamino acids, producing glycine and aldehydes, via a retro-aldol mechanism. The chain is Serine hydroxymethyltransferase from Chlorobaculum parvum (strain DSM 263 / NCIMB 8327) (Chlorobium vibrioforme subsp. thiosulfatophilum).